A 397-amino-acid polypeptide reads, in one-letter code: Putative 8-amino-7-oxononanoate synthase (397 aa).

R22 lines the substrate pocket. 109–110 contributes to the pyridoxal 5'-phosphate binding site; the sequence is GW. H139 contacts substrate. Pyridoxal 5'-phosphate is bound by residues S187, 212 to 215, and 241 to 244; these read DEAH and TFSK. K244 bears the N6-(pyridoxal phosphate)lysine mark. T358 lines the substrate pocket.

It belongs to the class-II pyridoxal-phosphate-dependent aminotransferase family. BioF subfamily. As to quaternary structure, homodimer. Pyridoxal 5'-phosphate is required as a cofactor.

The catalysed reaction is 6-carboxyhexanoyl-[ACP] + L-alanine + H(+) = (8S)-8-amino-7-oxononanoate + holo-[ACP] + CO2. The protein operates within cofactor biosynthesis; biotin biosynthesis. In terms of biological role, catalyzes the decarboxylative condensation of pimeloyl-[acyl-carrier protein] and L-alanine to produce 8-amino-7-oxononanoate (AON), [acyl-carrier protein], and carbon dioxide. This is Putative 8-amino-7-oxononanoate synthase (bioF) from Bordetella parapertussis (strain 12822 / ATCC BAA-587 / NCTC 13253).